The chain runs to 80 residues: UPF0291 protein LCA_1274 (80 aa).

Positions 59-80 (EGKEVTPEKVKDIQREKGLRDD) are disordered.

This sequence belongs to the UPF0291 family.

Its subcellular location is the cytoplasm. The polypeptide is UPF0291 protein LCA_1274 (Latilactobacillus sakei subsp. sakei (strain 23K) (Lactobacillus sakei subsp. sakei)).